A 136-amino-acid chain; its full sequence is Fatty acid-binding protein homolog 5 (136 aa).

A fatty acid-binding positions include Arg111 and 131-133 (RAY).

This sequence belongs to the calycin superfamily. Fatty-acid binding protein (FABP) family.

This Caenorhabditis elegans protein is Fatty acid-binding protein homolog 5 (lbp-5).